The following is a 732-amino-acid chain: Bromodomain-containing factor 1 (732 aa).

The span at M1–N22 shows a compositional bias: polar residues. 5 disordered regions span residues M1–E207, T324–P380, N491–V517, R556–Q600, and V700–E732. Residues S37–P51 show a composition bias toward low complexity. Residues A89 to S100 are compositionally biased toward polar residues. Acidic residues predominate over residues E137 to V147. The Bromo 1 domain occupies P206 to V315. The segment covering A327–T338 has biased composition (polar residues). Residues K370–P380 show a composition bias toward basic and acidic residues. A Bromo 2 domain is found at K383–K492. Residues A529–K569 are a coiled coil. Residues A561–H579 show a composition bias toward basic residues. The segment covering P590 to Q600 has biased composition (pro residues). Positions P593–G672 constitute an NET domain. The segment covering E718 to E732 has biased composition (acidic residues).

This sequence belongs to the BET family.

The protein localises to the nucleus. In terms of biological role, transcription factor involved in the expression of a broad class of genes including snRNAs. Required for sporulation and DNA-damage repair. Prevents the spreading of SIR silencing at telomeres and protects histone H4, but not H3, from deacetylation. This Candida albicans (strain SC5314 / ATCC MYA-2876) (Yeast) protein is Bromodomain-containing factor 1 (BDF1).